The primary structure comprises 395 residues: MSGNLQREALLKEFENAGKMIHAFDTAPEGNGEEDTITELPVVKNPGLGVSSETKAENMEDTGFPRWTEFFAKNETVSLPNRNFTFNTYFQVPEVNSSDLSSIPIFLAHHGAGSTGLTFAPLAKTLKEDLGTNFGFFSFDARGHGETKPLDPTDVTYYLNDFVTDFVELIVWFYENYLKACKQSKLSLILVGHSLGGSVCANLYEHLPEYIKRHTTGLAMLDIVEEMAKFVLTKVDHFLSVTPNVFGSAKEAVDWYQSHNYSKLKESAEISVPALFHKAKSGKVVRITNLASFKPYWDSWFDGLSAKFVSLPTSKLLILAGNDNLDKELIVGQMQGKYQLIVFQDSGHFIQEDVPKKAAISLVDFWKRSDNRNVTIKTNWGSSQNKTLEGKKTVE.

Catalysis depends on residues Ser-194, Asp-222, and His-348.

This sequence belongs to the AB hydrolase superfamily.

It catalyses the reaction [phosphatase 2A protein]-C-terminal L-leucine methyl ester + H2O = [phosphatase 2A protein]-C-terminal L-leucine + methanol + H(+). Its function is as follows. Demethylates proteins that have been reversibly carboxymethylated. Demethylates the phosphatase PP2A catalytic subunit. This chain is Protein phosphatase methylesterase 1 (PPE1), found in Kluyveromyces lactis (strain ATCC 8585 / CBS 2359 / DSM 70799 / NBRC 1267 / NRRL Y-1140 / WM37) (Yeast).